A 146-amino-acid polypeptide reads, in one-letter code: Flagellar assembly factor FliW 1 (146 aa).

Belongs to the FliW family. Interacts with translational regulator CsrA and flagellin(s).

The protein localises to the cytoplasm. Functionally, acts as an anti-CsrA protein, binds CsrA and prevents it from repressing translation of its target genes, one of which is flagellin. Binds to flagellin and participates in the assembly of the flagellum. The protein is Flagellar assembly factor FliW 1 of Helicobacter hepaticus (strain ATCC 51449 / 3B1).